The primary structure comprises 431 residues: BEL1-like homeodomain protein 5 (431 aa).

The tract at residues 80-96 (PIYLKAAQELLNEIVNV) is SR/KY domain. The segment at 128-199 (GVAALQMKKA…AVKDMISLQI (72 aa)) is BELL domain. The segment at residues 228-290 (AWRPQRGLPE…NARVRMWKPL (63 aa)) is a DNA-binding region (homeobox). Over residues 302–312 (EESRKGSDRYS) the composition is skewed to basic and acidic residues. The segment at 302-333 (EESRKGSDRYSTKGSSSKQPYNNTTSNESSNT) is disordered. Polar residues predominate over residues 313–322 (TKGSSSKQPY). Positions 323–333 (NNTTSNESSNT) are enriched in low complexity.

The protein belongs to the TALE/BELL homeobox family. In terms of assembly, may form heterodimeric complexes with TALE/KNOX proteins. Interacts with OFP1.

The protein resides in the nucleus. In Arabidopsis thaliana (Mouse-ear cress), this protein is BEL1-like homeodomain protein 5 (BLH5).